The chain runs to 336 residues: Ketol-acid reductoisomerase (NADP(+)) 1 (336 aa).

The KARI N-terminal Rossmann domain occupies 2–181; that stretch reads AKVYYEKDVT…GATRAGVLET (180 aa). Residues 25–28, R48, S52, and 82–85 contribute to the NADP(+) site; these read YGSQ and DELQ. H107 is an active-site residue. NADP(+) is bound at residue G133. The region spanning 182-327 is the KARI C-terminal knotted domain; sequence TFKEETETDL…RKLREMMPFV (146 aa). Residues D190, E194, E226, and E230 each contribute to the Mg(2+) site. A substrate-binding site is contributed by S251.

It belongs to the ketol-acid reductoisomerase family. Requires Mg(2+) as cofactor.

It carries out the reaction (2R)-2,3-dihydroxy-3-methylbutanoate + NADP(+) = (2S)-2-acetolactate + NADPH + H(+). The enzyme catalyses (2R,3R)-2,3-dihydroxy-3-methylpentanoate + NADP(+) = (S)-2-ethyl-2-hydroxy-3-oxobutanoate + NADPH + H(+). Its pathway is amino-acid biosynthesis; L-isoleucine biosynthesis; L-isoleucine from 2-oxobutanoate: step 2/4. It functions in the pathway amino-acid biosynthesis; L-valine biosynthesis; L-valine from pyruvate: step 2/4. Involved in the biosynthesis of branched-chain amino acids (BCAA). Catalyzes an alkyl-migration followed by a ketol-acid reduction of (S)-2-acetolactate (S2AL) to yield (R)-2,3-dihydroxy-isovalerate. In the isomerase reaction, S2AL is rearranged via a Mg-dependent methyl migration to produce 3-hydroxy-3-methyl-2-ketobutyrate (HMKB). In the reductase reaction, this 2-ketoacid undergoes a metal-dependent reduction by NADPH to yield (R)-2,3-dihydroxy-isovalerate. In Bacillus thuringiensis subsp. konkukian (strain 97-27), this protein is Ketol-acid reductoisomerase (NADP(+)) 1.